Reading from the N-terminus, the 306-residue chain is Pantothenate kinase (306 aa).

91-98 (GSVAVGKS) serves as a coordination point for ATP.

This sequence belongs to the prokaryotic pantothenate kinase family.

It is found in the cytoplasm. It carries out the reaction (R)-pantothenate + ATP = (R)-4'-phosphopantothenate + ADP + H(+). The protein operates within cofactor biosynthesis; coenzyme A biosynthesis; CoA from (R)-pantothenate: step 1/5. This is Pantothenate kinase from Streptococcus thermophilus (strain ATCC BAA-491 / LMD-9).